A 166-amino-acid chain; its full sequence is Testis-expressed protein 51 (166 aa).

Positions 1 to 15 (MLPLLIICLLPAIEG) are cleaved as a signal peptide. Residues 138 to 154 (SLWAVSLSSALLLAIAG) form a helical membrane-spanning segment.

It is found in the membrane. The polypeptide is Testis-expressed protein 51 (Homo sapiens (Human)).